We begin with the raw amino-acid sequence, 227 residues long: UPF0688 protein C1orf174 homolog (227 aa).

2 disordered regions span residues 1-122 and 207-227; these read MRKR…VSDL and AKEE…EGNI. A compositionally biased stretch (basic and acidic residues) spans 47-63; the sequence is TEKESSKKLRKDEKGPV. 2 stretches are compositionally biased toward polar residues: residues 77-104 and 113-122; these read AASN…NGTR and RLPSSPVSDL.

This sequence belongs to the UPF0688 family.

It localises to the nucleus. This Xenopus tropicalis (Western clawed frog) protein is UPF0688 protein C1orf174 homolog.